The following is a 95-amino-acid chain: Selenoprotein K (95 aa).

A helical membrane pass occupies residues 20 to 42 (LSFITDFFWGIAEFVVLFFRTLL). The tract at residues 47–95 (KKRRGYGSSSDSRYDDGRGPPGNPPRRRMGRINHLQGPNPPPMAGGUGR) is disordered. Residue selenocysteine 93 is a non-standard amino acid, selenocysteine.

It belongs to the selenoprotein K family. In terms of assembly, interacts with DERL1, DERL2, DERL3 and SELENOS. The SELENOK-SELENOS complex interacts with VCP. Interacts with ZDHHC6. Post-translationally, cleaved by CAPN2/m-calpain in resting macrophages but not in activated macrophages. Macrophage activation up-regulates expression of the calpain inhibitor CAST/calpastatin, resulting in inhibition of CAPN2 activity. In terms of processing, truncated SELENOK proteins produced by failed UGA/Sec decoding are ubiquitinated by the CRL2(KLHDC2) complex, which recognizes the diglycine (Gly-Gly) at the C-terminus of truncated SELENOK proteins.

The protein resides in the endoplasmic reticulum membrane. It localises to the cell membrane. Its function is as follows. Required for Ca(2+) flux in immune cells and plays a role in T-cell proliferation and in T-cell and neutrophil migration. Involved in endoplasmic reticulum-associated degradation (ERAD) of soluble glycosylated proteins. Required for palmitoylation and cell surface expression of CD36 and involved in macrophage uptake of low-density lipoprotein and in foam cell formation. Together with ZDHHC6, required for palmitoylation of ITPR1 in immune cells, leading to regulate ITPR1 stability and function. Plays a role in protection of cells from ER stress-induced apoptosis. Protects cells from oxidative stress when overexpressed in cardiomyocytes. This Bos taurus (Bovine) protein is Selenoprotein K.